Here is a 518-residue protein sequence, read N- to C-terminus: Light-independent protochlorophyllide reductase subunit B (518 aa).

Aspartate 36 contacts [4Fe-4S] cluster. The Proton donor role is filled by aspartate 285. Residue 420–421 participates in substrate binding; the sequence is GL.

Belongs to the ChlB/BchB/BchZ family. Protochlorophyllide reductase is composed of three subunits; BchL, BchN and BchB. Forms a heterotetramer of two BchB and two BchN subunits. Requires [4Fe-4S] cluster as cofactor.

The catalysed reaction is chlorophyllide a + oxidized 2[4Fe-4S]-[ferredoxin] + 2 ADP + 2 phosphate = protochlorophyllide a + reduced 2[4Fe-4S]-[ferredoxin] + 2 ATP + 2 H2O. Its pathway is porphyrin-containing compound metabolism; bacteriochlorophyll biosynthesis (light-independent). Functionally, component of the dark-operative protochlorophyllide reductase (DPOR) that uses Mg-ATP and reduced ferredoxin to reduce ring D of protochlorophyllide (Pchlide) to form chlorophyllide a (Chlide). This reaction is light-independent. The NB-protein (BchN-BchB) is the catalytic component of the complex. The sequence is that of Light-independent protochlorophyllide reductase subunit B from Bradyrhizobium sp. (strain ORS 278).